Reading from the N-terminus, the 177-residue chain is MSDTEDNRNKQTTRRDFIVLTASSVAAVGAACAFWPIIDSLNPSTDVLALSSIEVDLSSIAIGQTVTVKWQGKPIFITNRTPDGIASARAVKMSELIDPEKDEVRVKAGHDNWLVTIGICTHLGCVPLSNQGEYNGWFCPCHGSQYDSSGRVRKGPASLNLVVPPYIFISDTKIRIG.

Residues 18–38 traverse the membrane as a helical segment; sequence IVLTASSVAAVGAACAFWPII. The 88-residue stretch at 88-175 folds into the Rieske domain; the sequence is ARAVKMSELI…YIFISDTKIR (88 aa). 4 residues coordinate [2Fe-2S] cluster: C120, H122, C139, and H142. A disulfide bridge links C125 with C141.

It belongs to the Rieske iron-sulfur protein family. In terms of assembly, the main subunits of complex b-c1 are: cytochrome b, cytochrome c1 and the Rieske protein. [2Fe-2S] cluster is required as a cofactor.

It is found in the cell membrane. It carries out the reaction a quinol + 2 Fe(III)-[cytochrome c](out) = a quinone + 2 Fe(II)-[cytochrome c](out) + 2 H(+)(out). Component of the ubiquinol-cytochrome c reductase complex (complex III or cytochrome b-c1 complex), which is a respiratory chain that generates an electrochemical potential coupled to ATP synthesis. This Rickettsia typhi (strain ATCC VR-144 / Wilmington) protein is Ubiquinol-cytochrome c reductase iron-sulfur subunit (petA).